A 186-amino-acid polypeptide reads, in one-letter code: Centromere protein M (186 aa).

The protein resides in the nucleus. It localises to the chromosome. Its subcellular location is the centromere. Functionally, probable component of a centromeric complex involved in assembly of kinetochore proteins, mitotic progression and chromosome segregation. The sequence is that of Centromere protein M (cenpm) from Danio rerio (Zebrafish).